Reading from the N-terminus, the 341-residue chain is MKTRDFKFDLPQELIAQVPIEDRASSRLMVLDKETGNIEHKVFRDIIEYLNPGDCLVLNNTRVIPARLIGEKLETGGKIEFLLLKRTEEDTWQALVKPGKRAKVGTKFSFGNGKLIGEVVDLSDEGSRIIKFHYDGIFEEILDELGNMPLPPYITARLDEKERYQTVYSKHNGSAAAPTAGLHFTEELLNKIKEKGVDIAFVTLHVGLGTFRPVKVEDVLNHKMHSEYYMVSQEAADKINRAKENGKNVICVGTTSCRTIESACNEDGKMKETSGWTEIFIYPGYKFKVLDKLITNFHLPESTLIMLVSAICGKDNVLNAYNEAVKERYRFFSFGDAMIIK.

Belongs to the QueA family. In terms of assembly, monomer.

Its subcellular location is the cytoplasm. The catalysed reaction is 7-aminomethyl-7-carbaguanosine(34) in tRNA + S-adenosyl-L-methionine = epoxyqueuosine(34) in tRNA + adenine + L-methionine + 2 H(+). It participates in tRNA modification; tRNA-queuosine biosynthesis. Its function is as follows. Transfers and isomerizes the ribose moiety from AdoMet to the 7-aminomethyl group of 7-deazaguanine (preQ1-tRNA) to give epoxyqueuosine (oQ-tRNA). The chain is S-adenosylmethionine:tRNA ribosyltransferase-isomerase from Clostridioides difficile (strain 630) (Peptoclostridium difficile).